The sequence spans 239 residues: Putative transcriptional regulator of 2-aminoethylphosphonate degradation operons (239 aa).

In terms of domain architecture, HTH gntR-type spans 8-76 (IPQYLLIKAQ…DRRGWFVTPE (69 aa)). Positions 36–55 (ERELCAIFNTTRITIRESLA) form a DNA-binding region, H-T-H motif.

The chain is Putative transcriptional regulator of 2-aminoethylphosphonate degradation operons (phnR) from Salmonella typhi.